Here is a 256-residue protein sequence, read N- to C-terminus: Calsenilin (256 aa).

The segment at 1–22 is disordered; the sequence is MQRTKEAMKASDGSLLGDPGRI. Ser14 is subject to Phosphoserine. Lys26 participates in a covalent cross-link: Glycyl lysine isopeptide (Lys-Gly) (interchain with G-Cter in SUMO1). S-palmitoyl cysteine attachment occurs at residues Cys45 and Cys46. A phosphoserine mark is found at Ser60 and Ser63. The region spanning 67-123 is the EF-hand 1; degenerate domain; that stretch reads LELSTVRHQPEGLDQLQAQTKFTKKELQSLYRGFKNECPTGLVDEDTFKLIYSQFFP. Lys90 participates in a covalent cross-link: Glycyl lysine isopeptide (Lys-Gly) (interchain with G-Cter in SUMO1). EF-hand domains lie at 126 to 161, 162 to 197, and 210 to 245; these read DATT…LLRG, TVHE…IYDM, and APLE…DENI. Positions 175, 177, 179, 181, 186, 223, 225, 227, and 234 each coordinate Ca(2+). The interval 243–256 is interaction with KCND2; it reads ENIMSSMQLFENVI.

Belongs to the recoverin family. Binds to DNA as a homomultimer. Dimerization is induced by binding to calcium. Interacts with the C-terminus of PSEN1 and PSEN2 and with PSEN2 CTF subunit. Associates with KCN1. Component of heteromultimeric potassium channels. Identified in potassium channel complexes containing KCND1, KCND2, KCND3, KCNIP1, KCNIP2, KCNIP3, KCNIP4, DPP6 and DPP10. Interacts with KCND2 and KCND3. In terms of processing, palmitoylated. Palmitoylation enhances association with the plasma membrane. Proteolytically cleaved by caspase-3. As to expression, detected in brain cortex, thalamus, dentate gyrus and cerebellum (at protein level). Expressed in brain. Colocalizes with KCND2 in excitatory neurons including cortical and hippocampal CA1 pyramidal cells.

It localises to the cytoplasm. The protein localises to the cell membrane. The protein resides in the endoplasmic reticulum. Its subcellular location is the golgi apparatus. It is found in the nucleus. Calcium-dependent transcriptional repressor that binds to the DRE element of genes including PDYN and FOS. Affinity for DNA is reduced upon binding to calcium and enhanced by binding to magnesium. Seems to be involved in nociception. Its function is as follows. Regulatory subunit of Kv4/D (Shal)-type voltage-gated rapidly inactivating A-type potassium channels, such as KCND2/Kv4.2 and KCND3/Kv4.3. Modulates channel expression at the cell membrane, gating characteristics, inactivation kinetics and rate of recovery from inactivation in a calcium-dependent and isoform-specific manner. Functionally, may play a role in the regulation of PSEN2 proteolytic processing and apoptosis. Together with PSEN2 involved in modulation of amyloid-beta formation. The sequence is that of Calsenilin (Kcnip3) from Rattus norvegicus (Rat).